The chain runs to 91 residues: Na(+)/H(+) antiporter subunit F (91 aa).

Transmembrane regions (helical) follow at residues 5–27 (ILMI…TLIG), 34–53 (IVAL…VIMM), and 63–82 (VVLV…SKFI).

The protein belongs to the CPA3 antiporters (TC 2.A.63) subunit F family. As to quaternary structure, forms a heterooligomeric complex that consists of seven subunits: MrpA, MrpB, MrpC, MrpD, MrpE, MrpF and MrpG.

The protein resides in the cell membrane. Its function is as follows. Mnh complex is a Na(+)Li(+)/H(+) antiporter involved in Na(+) and/or Li(+) excretion and Na(+) resistance. Na(+)/H(+) antiport consumes a transmembrane electrical potential, and is thus inferred to be electrogenic. Does not transport K(+), Ca(2+) or Mg(2+). The polypeptide is Na(+)/H(+) antiporter subunit F (mrpF) (Alkalihalophilus pseudofirmus (strain ATCC BAA-2126 / JCM 17055 / OF4) (Bacillus pseudofirmus)).